Consider the following 222-residue polypeptide: Protein-L-isoaspartate O-methyltransferase (222 aa).

Ser-69 is an active-site residue.

The protein belongs to the methyltransferase superfamily. L-isoaspartyl/D-aspartyl protein methyltransferase family.

The protein resides in the cytoplasm. It catalyses the reaction [protein]-L-isoaspartate + S-adenosyl-L-methionine = [protein]-L-isoaspartate alpha-methyl ester + S-adenosyl-L-homocysteine. In terms of biological role, catalyzes the methyl esterification of L-isoaspartyl residues in peptides and proteins that result from spontaneous decomposition of normal L-aspartyl and L-asparaginyl residues. It plays a role in the repair and/or degradation of damaged proteins. The protein is Protein-L-isoaspartate O-methyltransferase of Caulobacter vibrioides (strain NA1000 / CB15N) (Caulobacter crescentus).